Reading from the N-terminus, the 565-residue chain is Urocanate hydratase (565 aa).

Residues 58–59, Gln-136, 182–184, Glu-202, Arg-207, 245–246, 266–270, 276–277, and Tyr-325 each bind NAD(+); these read GG, GMG, NA, QTSAH, and YL. Residue Cys-413 is part of the active site. Residue Gly-495 participates in NAD(+) binding.

The protein belongs to the urocanase family. The cofactor is NAD(+).

It is found in the cytoplasm. The catalysed reaction is 4-imidazolone-5-propanoate = trans-urocanate + H2O. The protein operates within amino-acid degradation; L-histidine degradation into L-glutamate; N-formimidoyl-L-glutamate from L-histidine: step 2/3. Functionally, catalyzes the conversion of urocanate to 4-imidazolone-5-propionate. The chain is Urocanate hydratase from Vibrio vulnificus (strain YJ016).